The following is a 1461-amino-acid chain: Gag-Pro-Pol polyprotein (1461 aa).

Residue Gly-2 is the site of N-myristoyl glycine; by host attachment. The PTAP/PSAP motif motif lies at 94–97; the sequence is PSAP. Positions 94–121 are disordered; it reads PSAPAAPVPTPICPTTTPPPPPPPSPEA. Residues 97–121 show a composition bias toward pro residues; that stretch reads PAAPVPTPICPTTTPPPPPPPSPEA. The PPXY motif signature appears at 124 to 127; the sequence is PPPY. Positions 130–133 match the PTAP/PSAP motif motif; it reads PTTT. 2 CCHC-type zinc fingers span residues 361 to 378 and 384 to 401; these read QPCF…DCTQ and GPCP…DCPQ. Positions 399–425 are disordered; sequence CPQLKPPQEEGEPLLLDLPSTSGTTEE. Residues 473–551 form the Peptidase A2 domain; it reads TQALLDTGAD…NKWTIIGRDA (79 aa). Asp-478 functions as the For protease activity; shared with dimeric partner in the catalytic mechanism. A Reverse transcriptase domain is found at 612–802; that stretch reads LEAGHIEPYS…GQIRFLGQVI (191 aa). The Mg(2+) site is built by Asp-678, Asp-753, Asp-754, Asp-1038, Glu-1073, Asp-1095, Asp-1156, Asp-1229, and Asp-1286. The 136-residue stretch at 1029–1164 folds into the RNase H type-1 domain; sequence LDTAPCLFSD…TDSLILAPLV (136 aa). An Integrase catalytic domain is found at 1218 to 1387; the sequence is RGLLPNHIWQ…PPIPEASTPP (170 aa). Residues 1392–1441 constitute a DNA-binding region (integrase-type); it reads KWFYYKLPGLTNQRWKGPLQSLQEAAGAALLSIDGSPRWIPWRFLKKAAC.

In terms of assembly, homodimer; the homodimers are part of the immature particles. Interacts with human TSG101 and NEDD4; these interactions are essential for budding and release of viral particles. As to quaternary structure, homodimer; further assembles as homohexamers. The cofactor is Mg(2+). Phosphorylation of the matrix protein p19 by MAPK1 seems to play a role in budding. Post-translationally, myristoylated. Myristoylation of the matrix (MA) domain mediates the transport and binding of Gag polyproteins to the host plasma membrane and is required for the assembly of viral particles. In terms of processing, specific enzymatic cleavages by the viral protease yield mature proteins. The polyprotein is cleaved during and after budding, this process is termed maturation. The protease is autoproteolytically processed at its N- and C-termini.

Its subcellular location is the virion. It catalyses the reaction Endonucleolytic cleavage to 5'-phosphomonoester.. It carries out the reaction DNA(n) + a 2'-deoxyribonucleoside 5'-triphosphate = DNA(n+1) + diphosphate. Its function is as follows. The matrix domain targets Gag, Gag-Pro and Gag-Pro-Pol polyproteins to the plasma membrane via a multipartite membrane binding signal, that includes its myristoylated N-terminus. In terms of biological role, matrix protein. Functionally, forms the spherical core of the virus that encapsulates the genomic RNA-nucleocapsid complex. Binds strongly to viral nucleic acids and promote their aggregation. Also destabilizes the nucleic acids duplexes via highly structured zinc-binding motifs. Its function is as follows. The aspartyl protease mediates proteolytic cleavages of Gag and Gag-Pol polyproteins during or shortly after the release of the virion from the plasma membrane. Cleavages take place as an ordered, step-wise cascade to yield mature proteins. This process is called maturation. Displays maximal activity during the budding process just prior to particle release from the cell (Potential). Cleaves the translation initiation factor eIF4G leading to the inhibition of host cap-dependent translation. In terms of biological role, RT is a multifunctional enzyme that converts the viral RNA genome into dsDNA in the cytoplasm, shortly after virus entry into the cell. This enzyme displays a DNA polymerase activity that can copy either DNA or RNA templates, and a ribonuclease H (RNase H) activity that cleaves the RNA strand of RNA-DNA heteroduplexes in a partially processive 3' to 5'-endonucleasic mode. Conversion of viral genomic RNA into dsDNA requires many steps. A tRNA-Pro binds to the primer-binding site (PBS) situated at the 5'-end of the viral RNA. RT uses the 3' end of the tRNA primer to perform a short round of RNA-dependent minus-strand DNA synthesis. The reading proceeds through the U5 region and ends after the repeated (R) region which is present at both ends of viral RNA. The portion of the RNA-DNA heteroduplex is digested by the RNase H, resulting in a ssDNA product attached to the tRNA primer. This ssDNA/tRNA hybridizes with the identical R region situated at the 3' end of viral RNA. This template exchange, known as minus-strand DNA strong stop transfer, can be either intra- or intermolecular. RT uses the 3' end of this newly synthesized short ssDNA to perform the RNA-dependent minus-strand DNA synthesis of the whole template. RNase H digests the RNA template except for a polypurine tract (PPT) situated at the 5' end of the genome. It is not clear if both polymerase and RNase H activities are simultaneous. RNase H probably can proceed both in a polymerase-dependent (RNA cut into small fragments by the same RT performing DNA synthesis) and a polymerase-independent mode (cleavage of remaining RNA fragments by free RTs). Secondly, RT performs DNA-directed plus-strand DNA synthesis using the PPT that has not been removed by RNase H as primer. PPT and tRNA primers are then removed by RNase H. The 3' and 5' ssDNA PBS regions hybridize to form a circular dsDNA intermediate. Strand displacement synthesis by RT to the PBS and PPT ends produces a blunt ended, linear dsDNA copy of the viral genome that includes long terminal repeats (LTRs) at both ends. Functionally, catalyzes viral DNA integration into the host chromosome, by performing a series of DNA cutting and joining reactions. In Human T-cell leukemia virus 2 (HTLV-2), this protein is Gag-Pro-Pol polyprotein (gag-pro-pol).